We begin with the raw amino-acid sequence, 100 residues long: MELTPREKDKLLIFTAALLAERRKARGLKLNYPESVALISAAIMEGARDGKTVAQLMHEGQTILGREDVMEGVPEMIQDIQIEATFPDGTKLVTVHNPIV.

The protein belongs to the urease gamma subunit family. In terms of assembly, heterotrimer of UreA (gamma), UreB (beta) and UreC (alpha) subunits. Three heterotrimers associate to form the active enzyme.

It is found in the cytoplasm. It catalyses the reaction urea + 2 H2O + H(+) = hydrogencarbonate + 2 NH4(+). It participates in nitrogen metabolism; urea degradation; CO(2) and NH(3) from urea (urease route): step 1/1. This chain is Urease subunit gamma, found in Polynucleobacter asymbioticus (strain DSM 18221 / CIP 109841 / QLW-P1DMWA-1) (Polynucleobacter necessarius subsp. asymbioticus).